Consider the following 350-residue polypeptide: Protein disulfide isomerase Creld2 (350 aa).

A signal peptide spans methionine 1–alanine 22. The CXXC motif lies at cysteine 29 to cysteine 32. Intrachain disulfides connect cysteine 29–cysteine 32, cysteine 138–cysteine 152, cysteine 146–cysteine 164, and cysteine 166–cysteine 175. In terms of domain architecture, EGF-like 1 spans aspartate 134–isoleucine 176. The stretch at histidine 191–proline 238 is one FU 1 repeat. The N-linked (GlcNAc...) asparagine glycan is linked to asparagine 249. The FU 2 repeat unit spans residues serine 251–alanine 298. The CXXC motif lies at cysteine 261–cysteine 264. Intrachain disulfides connect cysteine 261/cysteine 264, cysteine 292/cysteine 306, cysteine 299/cysteine 315, and cysteine 317/cysteine 328. Residues aspartate 288–valine 329 form the EGF-like 2; calcium-binding domain.

It belongs to the CRELD family. Interacts with CHRNA4. Component of a complex containing at least CRELD2, MANF, MATN3 and PDIA4. As to expression, expressed in chondrocytes (at protein level).

It localises to the endoplasmic reticulum. The enzyme catalyses Catalyzes the rearrangement of -S-S- bonds in proteins.. Functionally, protein disulfide isomerase. Might play a role in the unfolded protein response. May regulate transport of alpha4-beta2 neuronal acetylcholine receptor. The chain is Protein disulfide isomerase Creld2 (Creld2) from Mus musculus (Mouse).